Reading from the N-terminus, the 417-residue chain is BSD domain-containing protein 1-B (417 aa).

Positions 153-205 (WLAYWDPEQRKAEISEPLVTSPSIRALFTKMVPAAVSHSEFWQRYFYKVHQLE) constitute a BSD domain. Disordered regions lie at residues 215–234 (KQRANQSVHSEEPKWEEEEE), 262–292 (HVEDKSEKTAELNRDHTSVTSPSESSESISP), and 323–390 (AAET…DFDM). Positions 262–278 (HVEDKSEKTAELNRDHT) are enriched in basic and acidic residues. The segment covering 281-292 (TSPSESSESISP) has biased composition (low complexity). A compositionally biased stretch (polar residues) spans 332-343 (PVEQTGKSNAQM). Residues 345 to 356 (THREDPPSDLRV) are compositionally biased toward basic and acidic residues. A compositionally biased stretch (polar residues) spans 360–379 (NSDSGKSTPSNNGQKGSSTD). The span at 380-390 (VSEDWEKDFDM) shows a compositional bias: acidic residues.

The protein is BSD domain-containing protein 1-B (bsdc1-b) of Xenopus laevis (African clawed frog).